A 373-amino-acid polypeptide reads, in one-letter code: Maltose/maltodextrin import ATP-binding protein MalK (373 aa).

Residues 4 to 234 (VTLKNVCKAY…PQNRFVAGFI (231 aa)) enclose the ABC transporter domain. 36 to 43 (GPSGCGKS) provides a ligand contact to ATP.

This sequence belongs to the ABC transporter superfamily. Maltooligosaccharide importer (TC 3.A.1.1.1) family. In terms of assembly, the complex is composed of two ATP-binding proteins (MalK), two transmembrane proteins (MalG and MalK) and a solute-binding protein (MalE).

Its subcellular location is the cell inner membrane. The enzyme catalyses D-maltose(out) + ATP + H2O = D-maltose(in) + ADP + phosphate + H(+). Part of the ABC transporter complex MalEFGK involved in maltose/maltodextrin import. Responsible for energy coupling to the transport system. This Vibrio cholerae serotype O1 (strain ATCC 39315 / El Tor Inaba N16961) protein is Maltose/maltodextrin import ATP-binding protein MalK.